The chain runs to 137 residues: Large ribosomal subunit protein uL16 (137 aa).

It belongs to the universal ribosomal protein uL16 family. Part of the 50S ribosomal subunit.

In terms of biological role, binds 23S rRNA and is also seen to make contacts with the A and possibly P site tRNAs. The polypeptide is Large ribosomal subunit protein uL16 (Leuconostoc citreum (strain KM20)).